A 324-amino-acid polypeptide reads, in one-letter code: MTGIKTTGEKKMMFFSGRAHPELAEEVAHKLGVGVVPTKAFDFANGEIYVRYQESARGADCFLIQSHTAPINKWIMEQLIMIDALKRASARSITVIVPFYGYARQDKKHRGREPISARLIADLMKTAGADRILTVDLHTDQIQGFFDGPVDHLFALPILADYVGAKVDRSKLTVVSPDAGRVRVADRWCDRLDAPLAIVHKRRDKDVANQVTVHEVVGDVKGRVCVLVDDMIDTGGTICAAADALFAHGAEDVIVTATHGVLSGPAADRLKNSKVSEFVFTDTLPTPGELELDKITVLSIAPTIANAVREVFEDGSVTSLFDEQ.

ATP is bound by residues 45 to 47 (NGE) and 104 to 105 (RQ). Mg(2+) is bound by residues H138 and D178. K201 is a catalytic residue. Residues R203, D229, and 233 to 237 (DTGGT) each bind D-ribose 5-phosphate.

It belongs to the ribose-phosphate pyrophosphokinase family. Class I subfamily. As to quaternary structure, homohexamer. The cofactor is Mg(2+).

It is found in the cytoplasm. The enzyme catalyses D-ribose 5-phosphate + ATP = 5-phospho-alpha-D-ribose 1-diphosphate + AMP + H(+). The protein operates within metabolic intermediate biosynthesis; 5-phospho-alpha-D-ribose 1-diphosphate biosynthesis; 5-phospho-alpha-D-ribose 1-diphosphate from D-ribose 5-phosphate (route I): step 1/1. In terms of biological role, involved in the biosynthesis of the central metabolite phospho-alpha-D-ribosyl-1-pyrophosphate (PRPP) via the transfer of pyrophosphoryl group from ATP to 1-hydroxyl of ribose-5-phosphate (Rib-5-P). In Streptomyces avermitilis (strain ATCC 31267 / DSM 46492 / JCM 5070 / NBRC 14893 / NCIMB 12804 / NRRL 8165 / MA-4680), this protein is Ribose-phosphate pyrophosphokinase.